The following is a 726-amino-acid chain: Pyrroloquinoline quinone-dependent pyranose dehydrogenase (726 aa).

The N-terminal stretch at 1-18 is a signal peptide; it reads MRSSSLAWALGLVALANA. Positions 83 and 108 each coordinate heme b. Cys-138 and Cys-141 are joined by a disulfide. The N-linked (GlcNAc...) asparagine glycan is linked to Asn-140. Heme b contacts are provided by Arg-181 and His-182. Positions 211–242 are disordered; that stretch reads PPLSGGAPTQPPTQQPPTTTAPPPPPPSSTFV. The span at 219 to 238 shows a compositional bias: pro residues; the sequence is TQPPTQQPPTTTAPPPPPPS. Cysteines 244 and 302 form a disulfide. Residues Arg-273, His-363, Arg-430, and Asn-431 each contribute to the pyrroloquinoline quinone site. 2 residues coordinate Ca(2+): Ser-449 and Asp-451. Cysteines 492 and 525 form a disulfide. His-539 contacts pyrroloquinoline quinone. Asn-551 is a glycosylation site (N-linked (GlcNAc...) asparagine). Pyrroloquinoline quinone is bound by residues His-560, Trp-563, and Asn-564. Cysteines 611 and 619 form a disulfide. Arg-621 lines the pyrroloquinoline quinone pocket. The segment covering 659-678 has biased composition (pro residues); it reads ITQPPITTSPPTPTTPPVVQ. The tract at residues 659-689 is disordered; sequence ITQPPITTSPPTPTTPPVVQPPTTVAPPQAS. The segment covering 679–689 has biased composition (low complexity); sequence PPTTVAPPQAS. In terms of domain architecture, CBM1 spans 688 to 724; that stretch reads ASQTLWGQCGGQGWTGPTLCPANSVCRESNQWYSQCV.

The protein belongs to the sugar dehydrogenase AA12 family. The cofactor is Ca(2+). Pyrroloquinoline quinone is required as a cofactor. Requires heme b as cofactor.

Its subcellular location is the secreted. Its function is as follows. Pyrroloquinoline quinone (PPQ)-dependent oxidoreductase that catalyzes the oxidation of various sugars including L-galactose, L-gulose, D-talose, D-arabinose, D-lyxose, L-fucose and D-glucosone. Shows significant activity toward the reverse-chair conformation of pyranoses. Shows little or no activity toward abundant sugars such as D-glucose, D-fructose, cellobiose, as well L-xylose and L-glucose. This enzyme is able to direct electrical communication with electrodes, without artificial electron mediators, thus allowing direct electron transfer (DET)-type bioelectrocatalysis. Exhibits binding affinity for insoluble cellulose. PDH does not oxidize cello-oligosaccharides but is able to activate the C-1-oxidizing Neurospora crassa LPMO9F and the C-4-oxidizing Neurospora crassa LPMO9C thanks to the electron-tranfer activity of the cytochrome domain and the localization of PDH in the vicinity of the LPMO substrates by the CBM1 domain. The polypeptide is Pyrroloquinoline quinone-dependent pyranose dehydrogenase (Coprinopsis cinerea (strain Okayama-7 / 130 / ATCC MYA-4618 / FGSC 9003) (Inky cap fungus)).